A 390-amino-acid polypeptide reads, in one-letter code: Transforming growth factor beta-1 proprotein (390 aa).

Positions 1-29 (MPPSGLRLLPLLLPLLWLLVLTPGRPAAG) are cleaved as a signal peptide. The segment at 30–74 (LSTCKTIDMELVKRKRIEAIRGQILSKLRLASPPSQGEVPPGPLP) is straightjacket domain. Positions 75-271 (EAVLALYNST…ATPLERAQQL (197 aa)) are arm domain. Residues Asn-82, Asn-136, and Asn-176 are each glycosylated (N-linked (GlcNAc...) asparagine). The segment at 226-252 (DSKDNTLRVGINGFSSSRRGDLATIDG) is bowtie tail. The Cell attachment site motif lies at 244–246 (RGD). Intrachain disulfides connect Cys-285-Cys-294, Cys-293-Cys-356, Cys-322-Cys-387, and Cys-326-Cys-389.

This sequence belongs to the TGF-beta family. In terms of assembly, homodimer; disulfide-linked. Interacts with the serine proteases, HTRA1 and HTRA3: the interaction with either inhibits TGFB1-mediated signaling and the HTRA protease activity is required for this inhibition. May interact with THSD4; this interaction may lead to sequestration by FBN1 microfibril assembly and attenuation of TGFB signaling. Interacts with CD109, DPT and ASPN. Interacts with EFEMP2. Interacts with TSKU; the interaction contributes to regulation of the hair cycle. Interacts with TGFBR3. Homodimer; disulfide-linked. Interacts with transforming growth factor beta-1 (TGF-beta-1) chain; interaction is non-covalent and maintains TGF-beta-1 in a latent state; each latency-associated peptide (LAP) monomer interacts with TGF-beta-1 in the other monomer. Interacts with LTBP1; leading to regulation of TGF-beta-1 activation. Interacts with LRRC32/GARP; leading to regulation of TGF-beta-1 activation on the surface of activated regulatory T-cells (Tregs). Interacts with LRRC33/NRROS; leading to regulation of TGF-beta-1 activation in macrophages and microglia. Interacts (via cell attachment site) with integrins ITGAV and ITGB6 (ITGAV:ITGB6), leading to release of the active TGF-beta-1. Latency-associated peptide: Interacts with NREP; the interaction results in a decrease in TGFB1 autoinduction. Interacts with HSP90AB1; inhibits latent TGFB1 activation. As to quaternary structure, homodimer; disulfide-linked. Interacts with TGF-beta receptors (TGFBR1 and TGFBR2), leading to signal transduction. Transforming growth factor beta-1 proprotein: The precursor proprotein is cleaved in the Golgi apparatus by FURIN to form Transforming growth factor beta-1 (TGF-beta-1) and Latency-associated peptide (LAP) chains, which remain non-covalently linked, rendering TGF-beta-1 inactive. In terms of processing, N-glycosylated. Deglycosylation leads to activation of Transforming growth factor beta-1 (TGF-beta-1); mechanisms triggering deglycosylation-driven activation of TGF-beta-1 are however unclear.

It localises to the secreted. The protein localises to the extracellular space. It is found in the extracellular matrix. Functionally, transforming growth factor beta-1 proprotein: Precursor of the Latency-associated peptide (LAP) and Transforming growth factor beta-1 (TGF-beta-1) chains, which constitute the regulatory and active subunit of TGF-beta-1, respectively. In terms of biological role, required to maintain the Transforming growth factor beta-1 (TGF-beta-1) chain in a latent state during storage in extracellular matrix. Associates non-covalently with TGF-beta-1 and regulates its activation via interaction with 'milieu molecules', such as LTBP1, LRRC32/GARP and LRRC33/NRROS, that control activation of TGF-beta-1. Interaction with LRRC33/NRROS regulates activation of TGF-beta-1 in macrophages and microglia. Interaction with LRRC32/GARP controls activation of TGF-beta-1 on the surface of activated regulatory T-cells (Tregs). Interaction with integrins (ITGAV:ITGB6 or ITGAV:ITGB8) results in distortion of the Latency-associated peptide chain and subsequent release of the active TGF-beta-1. Multifunctional protein that regulates the growth and differentiation of various cell types and is involved in various processes, such as normal development, immune function, microglia function and responses to neurodegeneration. Activation into mature form follows different steps: following cleavage of the proprotein in the Golgi apparatus, Latency-associated peptide (LAP) and Transforming growth factor beta-1 (TGF-beta-1) chains remain non-covalently linked rendering TGF-beta-1 inactive during storage in extracellular matrix. At the same time, LAP chain interacts with 'milieu molecules', such as LTBP1, LRRC32/GARP and LRRC33/NRROS that control activation of TGF-beta-1 and maintain it in a latent state during storage in extracellular milieus. TGF-beta-1 is released from LAP by integrins (ITGAV:ITGB6 or ITGAV:ITGB8): integrin-binding to LAP stabilizes an alternative conformation of the LAP bowtie tail and results in distortion of the LAP chain and subsequent release of the active TGF-beta-1. Once activated following release of LAP, TGF-beta-1 acts by binding to TGF-beta receptors (TGFBR1 and TGFBR2), which transduce signal. While expressed by many cells types, TGF-beta-1 only has a very localized range of action within cell environment thanks to fine regulation of its activation by Latency-associated peptide chain (LAP) and 'milieu molecules'. Plays an important role in bone remodeling: acts as a potent stimulator of osteoblastic bone formation, causing chemotaxis, proliferation and differentiation in committed osteoblasts. Can promote either T-helper 17 cells (Th17) or regulatory T-cells (Treg) lineage differentiation in a concentration-dependent manner. At high concentrations, leads to FOXP3-mediated suppression of RORC and down-regulation of IL-17 expression, favoring Treg cell development. At low concentrations in concert with IL-6 and IL-21, leads to expression of the IL-17 and IL-23 receptors, favoring differentiation to Th17 cells. Stimulates sustained production of collagen through the activation of CREB3L1 by regulated intramembrane proteolysis (RIP). Mediates SMAD2/3 activation by inducing its phosphorylation and subsequent translocation to the nucleus. Positively regulates odontoblastic differentiation in dental papilla cells, via promotion of IPO7-mediated translocation of phosphorylated SMAD2 to the nucleus and subsequent transcription of target genes. Can induce epithelial-to-mesenchymal transition (EMT) and cell migration in various cell types. This Equus caballus (Horse) protein is Transforming growth factor beta-1 proprotein (TGFB1).